The following is a 545-amino-acid chain: Glutamyl-tRNA(Gln) amidotransferase subunit B-1, chloroplastic/mitochondrial (545 aa).

It belongs to the GatB/GatE family. GatB subfamily. Subunit of the heterotrimeric GatCAB amidotransferase (AdT) complex, composed of A, B and C subunits.

It is found in the mitochondrion. It localises to the plastid. Its subcellular location is the chloroplast. The catalysed reaction is L-glutamyl-tRNA(Gln) + L-glutamine + ATP + H2O = L-glutaminyl-tRNA(Gln) + L-glutamate + ADP + phosphate + H(+). Allows the formation of correctly charged Gln-tRNA(Gln) through the transamidation of misacylated Glu-tRNA(Gln) in chloroplasts and mitochondria. The reaction takes place in the presence of glutamine and ATP through an activated gamma-phospho-Glu-tRNA(Gln). This chain is Glutamyl-tRNA(Gln) amidotransferase subunit B-1, chloroplastic/mitochondrial, found in Micromonas pusilla (strain CCMP1545) (Picoplanktonic green alga).